We begin with the raw amino-acid sequence, 366 residues long: tRNA/tmRNA (uracil-C(5))-methyltransferase (366 aa).

S-adenosyl-L-methionine is bound by residues Q190, Y218, N223, E239, and D299. C324 (nucleophile) is an active-site residue. Residue E358 is the Proton acceptor of the active site.

It belongs to the class I-like SAM-binding methyltransferase superfamily. RNA M5U methyltransferase family. TrmA subfamily.

The enzyme catalyses uridine(54) in tRNA + S-adenosyl-L-methionine = 5-methyluridine(54) in tRNA + S-adenosyl-L-homocysteine + H(+). It catalyses the reaction uridine(341) in tmRNA + S-adenosyl-L-methionine = 5-methyluridine(341) in tmRNA + S-adenosyl-L-homocysteine + H(+). In terms of biological role, dual-specificity methyltransferase that catalyzes the formation of 5-methyluridine at position 54 (m5U54) in all tRNAs, and that of position 341 (m5U341) in tmRNA (transfer-mRNA). The protein is tRNA/tmRNA (uracil-C(5))-methyltransferase of Escherichia coli O157:H7.